A 381-amino-acid polypeptide reads, in one-letter code: Queuine tRNA-ribosyltransferase (381 aa).

Aspartate 96 acts as the Proton acceptor in catalysis. Substrate contacts are provided by residues 96–100, aspartate 150, glutamine 193, and glycine 220; that span reads DSGGF. Positions 251-257 are RNA binding; it reads GVGAPDS. Aspartate 270 functions as the Nucleophile in the catalytic mechanism. The RNA binding; important for wobble base 34 recognition stretch occupies residues 275 to 279; that stretch reads TRIAR. Zn(2+)-binding residues include cysteine 308, cysteine 310, cysteine 313, and histidine 339.

The protein belongs to the queuine tRNA-ribosyltransferase family. Homodimer. Within each dimer, one monomer is responsible for RNA recognition and catalysis, while the other monomer binds to the replacement base PreQ1. Requires Zn(2+) as cofactor.

The enzyme catalyses 7-aminomethyl-7-carbaguanine + guanosine(34) in tRNA = 7-aminomethyl-7-carbaguanosine(34) in tRNA + guanine. Its pathway is tRNA modification; tRNA-queuosine biosynthesis. In terms of biological role, catalyzes the base-exchange of a guanine (G) residue with the queuine precursor 7-aminomethyl-7-deazaguanine (PreQ1) at position 34 (anticodon wobble position) in tRNAs with GU(N) anticodons (tRNA-Asp, -Asn, -His and -Tyr). Catalysis occurs through a double-displacement mechanism. The nucleophile active site attacks the C1' of nucleotide 34 to detach the guanine base from the RNA, forming a covalent enzyme-RNA intermediate. The proton acceptor active site deprotonates the incoming PreQ1, allowing a nucleophilic attack on the C1' of the ribose to form the product. After dissociation, two additional enzymatic reactions on the tRNA convert PreQ1 to queuine (Q), resulting in the hypermodified nucleoside queuosine (7-(((4,5-cis-dihydroxy-2-cyclopenten-1-yl)amino)methyl)-7-deazaguanosine). The protein is Queuine tRNA-ribosyltransferase of Enterococcus faecalis (strain ATCC 700802 / V583).